A 468-amino-acid polypeptide reads, in one-letter code: UDP-N-acetylmuramate--L-alanine ligase (468 aa).

112 to 118 (GTHGKTT) lines the ATP pocket.

This sequence belongs to the MurCDEF family.

It is found in the cytoplasm. It catalyses the reaction UDP-N-acetyl-alpha-D-muramate + L-alanine + ATP = UDP-N-acetyl-alpha-D-muramoyl-L-alanine + ADP + phosphate + H(+). The protein operates within cell wall biogenesis; peptidoglycan biosynthesis. Functionally, cell wall formation. In Neisseria meningitidis serogroup C (strain 053442), this protein is UDP-N-acetylmuramate--L-alanine ligase.